A 147-amino-acid polypeptide reads, in one-letter code: uncharacterized protein (147 aa).

This is an uncharacterized protein from Gallid herpesvirus 2 (strain Chicken/Md5/ATCC VR-987) (GaHV-2).